A 243-amino-acid chain; its full sequence is MSKQKKSEIVNRFRKRFDTKMTELGFTYQNIDLYQQAFSHSSFINDFNMNRLDHNERLEFLGDAVLELTVSRYLFDKHPNLPEGNLTKMRATIVCEPSLVIFANKIGLNEMILLGKGEEKTGGRTRPSLISDAFEAFIGALYLDQGLDIVWKFAEKVIFPHVEQNELLGVVDFKTQFQEYVHQQNKGDVTYNLIKEEGPAHHRLFTSEVILQGEAIAEGKGKTKKESEQRAAKSAYKQLKQIK.

The RNase III domain occupies 10-146 (VNRFRKRFDT…FIGALYLDQG (137 aa)). Glutamate 59 contacts Mg(2+). Aspartate 63 is a catalytic residue. The Mg(2+) site is built by aspartate 132 and glutamate 135. Glutamate 135 is a catalytic residue. The DRBM domain occupies 172 to 241 (DFKTQFQEYV…AKSAYKQLKQ (70 aa)). The segment covering 219 to 231 (GKGKTKKESEQRA) has biased composition (basic and acidic residues). Positions 219–243 (GKGKTKKESEQRAAKSAYKQLKQIK) are disordered.

The protein belongs to the ribonuclease III family. Homodimer. It depends on Mg(2+) as a cofactor.

Its subcellular location is the cytoplasm. The catalysed reaction is Endonucleolytic cleavage to 5'-phosphomonoester.. Functionally, digests double-stranded RNA. Involved in the processing of primary rRNA transcript to yield the immediate precursors to the large and small rRNAs (23S and 16S). Processes some mRNAs, and tRNAs when they are encoded in the rRNA operon. Processes pre-crRNA and tracrRNA of type II CRISPR loci if present in the organism. In Staphylococcus aureus (strain Mu3 / ATCC 700698), this protein is Ribonuclease 3.